A 348-amino-acid polypeptide reads, in one-letter code: Sesquiterpene synthase MGU_11447 (348 aa).

Residues Asp-91 and Asp-96 each contribute to the Mg(2+) site. A DDXXXD motif motif is present at residues 91-96 (DDLFVD). Arg-184 provides a ligand contact to substrate. Mg(2+) is bound by residues Asn-230, Ser-234, and Glu-238.

This sequence belongs to the terpene synthase family. It depends on Mg(2+) as a cofactor.

It carries out the reaction (2E,6E)-farnesyl diphosphate + H2O = (+)-corvol ether B + diphosphate. The catalysed reaction is (2E,6E)-farnesyl diphosphate + H2O = (+)-corvol ether A + diphosphate. Functionally, terpene synthase that catalyzes the conversion of (2E,6E)-farnesyl diphosphate (FPP) into sesquiterpenes which are important for fungi-environment interactions. Produces a mixture consisting of 8 sesquiterpenes including corvol ethers A and B, as well as traces of epizonarene, gamma-cadinene, delta-cadinene, alpha-cadinene, alpha-cadinol, and an unidentified sesquiterpene. Produces both corvol ether A and corvol ether B in similar concentrations. In Metarhizium guizhouense (strain ARSEF 977), this protein is Sesquiterpene synthase MGU_11447.